The primary structure comprises 640 residues: 1,4-alpha-glucan branching enzyme GlgB (640 aa).

Asp-318 acts as the Nucleophile in catalysis. Catalysis depends on Glu-371, which acts as the Proton donor.

This sequence belongs to the glycosyl hydrolase 13 family. GlgB subfamily. In terms of assembly, monomer.

It catalyses the reaction Transfers a segment of a (1-&gt;4)-alpha-D-glucan chain to a primary hydroxy group in a similar glucan chain.. It functions in the pathway glycan biosynthesis; glycogen biosynthesis. Functionally, catalyzes the formation of the alpha-1,6-glucosidic linkages in glycogen by scission of a 1,4-alpha-linked oligosaccharide from growing alpha-1,4-glucan chains and the subsequent attachment of the oligosaccharide to the alpha-1,6 position. This Francisella tularensis subsp. novicida (strain U112) protein is 1,4-alpha-glucan branching enzyme GlgB.